Consider the following 369-residue polypeptide: MELATTGKVNEVLFMNRGEGESSYAQNSSFTQQVASMATPALENAVETLFSKDFHLQALNAVDLGCAAGPNTFAVISTIKRMMEKKCRELNCQTLELQVYLNDLFGNDFNTLFKGLSSEVIGNKCEEVPCYVMGVPGSFHGRLFPRNSLHLVHSSYSVHWLTQAPKGLTNREGLALNKGKIYISKTSPPIVREAYLTQFHEDFTMFLNARSQEVVPNGCMVLILRSRQSSDPSDMQSCFTWELLAKAIAELVSQGLIDEDKLDAFNIPCYFPSLEEVKDIVERDGSFTIDHMEGFGLDSLQMEENDKWVRGEKFTKVVRAFTEPIISNQFGHEIMDKLYDKFTHIVVSDFEAKLPKTTSIILVLSKIDG.

S-adenosyl-L-homocysteine is bound at residue Tyr24. Thr31 contributes to the caffeine binding site. Residues Cys66, Asn71, Asp103, Leu104, Ser138, and Phe139 each contribute to the S-adenosyl-L-homocysteine site. The caffeine site is built by Tyr156, His159, and Trp160. Asn177 contacts Mg(2+). Residue Arg225 coordinates caffeine. The Mg(2+) site is built by Asp263, Phe265, and Asn266. A caffeine-binding site is contributed by Phe321.

This sequence belongs to the methyltransferase superfamily. Type-7 methyltransferase family. It depends on Mg(2+) as a cofactor.

The catalysed reaction is theobromine + S-adenosyl-L-methionine = caffeine + S-adenosyl-L-homocysteine + H(+). It catalyses the reaction 7-methylxanthine + S-adenosyl-L-methionine = theobromine + S-adenosyl-L-homocysteine + H(+). It functions in the pathway alkaloid biosynthesis. Its function is as follows. Involved in the biosynthesis of caffeine. Catalyzes the conversion of 7-methylxanthine (7mX) to theobromine and of theobromine to caffeine. This chain is Caffeine synthase 1, found in Camellia taliensis (Wild tea).